The chain runs to 2278 residues: Genome polyprotein (2278 aa).

In terms of domain architecture, SF3 helicase spans 454–609 (LESTANSIRS…EDWKKKNPGK (156 aa)). 481-488 (GPPGIGKT) is an ATP binding site. The tract at residues 939–958 (EEAKGKTKHGRGAKHARRGG) is disordered. Positions 944–956 (KTKHGRGAKHARR) are enriched in basic residues. Tyr-966 is subject to O-(5'-phospho-RNA)-tyrosine. Residues 1056 to 1204 (APTPIVTFTS…TKLAQRVTKT (149 aa)) form the Peptidase C24 domain. Residues His-1086, Glu-1107, and Cys-1171 each act as for 3CLpro activity in the active site. One can recognise a RdRp catalytic domain in the interval 1443-1568 (GVLYCLDYSK…SVCPATASIF (126 aa)).

Homodimer. Homomultimer. Specific enzymatic cleavages in vivo yield mature proteins. Pro-Pol is first autocatalytically cleaved, then processes the whole polyprotein. Post-translationally, VPg is uridylylated by the polymerase and is covalently attached to the 5'-end of the polyadenylated genomic and subgenomic RNAs. This uridylylated form acts as a nucleotide-peptide primer for the polymerase.

It localises to the virion. It is found in the host cytoplasm. The catalysed reaction is a ribonucleoside 5'-triphosphate + H2O = a ribonucleoside 5'-diphosphate + phosphate + H(+). The enzyme catalyses RNA(n) + a ribonucleoside 5'-triphosphate = RNA(n+1) + diphosphate. It carries out the reaction Endopeptidase with a preference for cleavage when the P1 position is occupied by Glu-|-Xaa and the P1' position is occupied by Gly-|-Yaa.. Its function is as follows. Together with NTPase and NS4, initiates the formation of the replication complex. Induces the proliferation of the host smooth ER membranes forming long tubular structures. These remodeled membranes probably form the viral factories that contain the replication complex. In terms of biological role, displays NTPase activity, but no helicase activity. Induces the formation of convoluted membranes derived from the host ER. These remodeled membranes probably form the viral factories that contain the replication complex. Together with NS2 and NS4, initiates the formation of the replication complex. Functionally, probable key protein responsible for the formation of membrane alterations by the virus. Induces the formation of convoluted membranes derived from the host ER. These remodeled membranes probably form the viral factories that contain the replication complex. Together with NS2 and NTPase, initiates the formation of the replication complex. Viral genome-linked protein is covalently linked to the 5'-end of the positive-strand, negative-strand genomic RNAs and subgenomic RNA. Acts as a genome-linked replication primer. May recruit ribosome to viral RNA thereby promoting viral proteins translation. Interacts with host translation initiation complex to allow the translation of viral proteins. Its function is as follows. Protease-polymerase p76 processes the polyprotein: Pro-Pol is first released by autocleavage, then all other proteins are cleaved. Cleaves host translation initiation factor eIF4G1, eIF4G2 and PABP1 thereby inducing a shutdown of host protein synthesis. This shutdown may not prevent viral mRNA from being translated since viral Vpg replaces the cap. It is also an RNA-directed RNA polymerase which replicates genomic and antigenomic viral RNA by recognizing specific signals. Also transcribes a subgenomic mRNA by initiating RNA synthesis internally on antigenomic RNA. This sgRNA codes for structural proteins. Catalyzes the covalent attachment VPg with viral RNAs. In terms of biological role, capsid protein self assembles to form an icosahedral capsid with a T=3 symmetry, about 38 nm in diameter, and consisting of 180 capsid proteins. The capsid encapsulate the genomic RNA and VP2 proteins. Attaches virion to target cells, inducing endocytosis of the viral particle. Acidification of the endosome induces conformational change of capsid protein thereby injecting virus genomic RNA into host cytoplasm. This Homo sapiens (Human) protein is Genome polyprotein.